Consider the following 650-residue polypeptide: Chaperone protein DnaK (650 aa).

Threonine 200 bears the Phosphothreonine; by autocatalysis mark. Over residues 611–634 (AQQAGAAGAAGAAAEGASAQGGAQ) the composition is skewed to low complexity. Residues 611-650 (AQQAGAAGAAGAAAEGASAQGGAQPPDDVVDADFKEVKKD) are disordered.

Belongs to the heat shock protein 70 family.

Acts as a chaperone. The polypeptide is Chaperone protein DnaK (Burkholderia pseudomallei (strain 1710b)).